A 317-amino-acid polypeptide reads, in one-letter code: L-lactate dehydrogenase (317 aa).

NAD(+) contacts are provided by residues Val-17, Asp-38, Lys-43, Tyr-68, and 82 to 83; that span reads GV. Arg-91 contributes to the substrate binding site. NAD(+)-binding positions include Ser-104, 121–123, and Ser-146; that span reads VSN. A substrate-binding site is contributed by 123–126; it reads NPVD. A substrate-binding site is contributed by 151 to 154; sequence DTSR. Positions 156 and 171 each coordinate beta-D-fructose 1,6-bisphosphate. Catalysis depends on His-178, which acts as the Proton acceptor. Residue Tyr-224 is modified to Phosphotyrosine. Thr-233 contacts substrate.

It belongs to the LDH/MDH superfamily. LDH family. In terms of assembly, homotetramer.

The protein localises to the cytoplasm. The enzyme catalyses (S)-lactate + NAD(+) = pyruvate + NADH + H(+). It participates in fermentation; pyruvate fermentation to lactate; (S)-lactate from pyruvate: step 1/1. Its activity is regulated as follows. Allosterically activated by fructose 1,6-bisphosphate (FBP). Its function is as follows. Catalyzes the conversion of lactate to pyruvate. The protein is L-lactate dehydrogenase of Clostridium perfringens (strain ATCC 13124 / DSM 756 / JCM 1290 / NCIMB 6125 / NCTC 8237 / Type A).